A 737-amino-acid polypeptide reads, in one-letter code: Autolysin (737 aa).

The span at 1–13 shows a compositional bias: basic and acidic residues; that stretch reads MKKESMSRIERRK. Disordered stretches follow at residues 1 to 28, 51 to 132, and 335 to 360; these read MKKESMSRIERRKAQQRKKTPVQWKKST, AEAT…TDSS, and PSSGGNTGGGTVNPGTGGSNNQSGTN. A signal peptide spans 1–53; the sequence is MKKESMSRIERRKAQQRKKTPVQWKKSTTLFSSALIVSSVGTPVALLPVTAEA. Positions 67 to 117 are enriched in low complexity; that stretch reads PTTETGLVETPTTETTPGTTEQPTTDSSTTTESTTESSKETPTTPSTEQPT. Over residues 118–132 the composition is skewed to polar residues; sequence ADSTTPVESGTTDSS. Gly residues predominate over residues 339–352; it reads GNTGGGTVNPGTGG. The 44-residue stretch at 361 to 404 folds into the LysM 1 domain; sequence TYYTVKSGDTLNKIAAQYGVSVANLRSWNGISGDLIFVGQKLIV. Residues 409–429 are disordered; that stretch reads SGNTGGSGSGGSNNNQSGTNT. Positions 410-419 are enriched in gly residues; it reads GNTGGSGSGG. Positions 420 to 429 are enriched in low complexity; that stretch reads SNNNQSGTNT. LysM domains lie at 429-472, 497-540, 565-608, 631-674, and 693-736; these read TYYT…KLIV, TYYT…KIIV, TSYT…TIIV, and KRHT…TLKV.

It belongs to the glycosyl hydrolase 73 family.

The protein localises to the secreted. In terms of biological role, hydrolyzes the cell wall of E.faecalis and M.lysodeikticus. May play an important role in cell wall growth and cell separation. This is Autolysin from Enterococcus faecalis (strain ATCC 700802 / V583).